Consider the following 303-residue polypeptide: tRNA dimethylallyltransferase (303 aa).

12 to 19 (GTTASGKS) contributes to the ATP binding site. Residue 14–19 (TASGKS) coordinates substrate. The interval 37 to 40 (DSRQ) is interaction with substrate tRNA.

Belongs to the IPP transferase family. In terms of assembly, monomer. It depends on Mg(2+) as a cofactor.

The enzyme catalyses adenosine(37) in tRNA + dimethylallyl diphosphate = N(6)-dimethylallyladenosine(37) in tRNA + diphosphate. Catalyzes the transfer of a dimethylallyl group onto the adenine at position 37 in tRNAs that read codons beginning with uridine, leading to the formation of N6-(dimethylallyl)adenosine (i(6)A). The protein is tRNA dimethylallyltransferase of Synechocystis sp. (strain ATCC 27184 / PCC 6803 / Kazusa).